Here is a 169-residue protein sequence, read N- to C-terminus: Secreted RxLR effector protein BLN03 (169 aa).

Positions 1–21 (MRPRKYIVVVLLSIAYTMCLA) are cleaved as a signal peptide. A dEER motif is present at residues 51-54 (TEER). The helical transmembrane segment at 149-169 (GSAFLFVIGFIVLLAFAMTAV) threads the bilayer.

It belongs to the RxLR effector family. Interacts with host transcription factor NAC069.

It localises to the secreted. The protein resides in the host membrane. Its function is as follows. Secreted effector that inhibits stress-induced relocalization of the endoplasmic reticulum tail-anchored transcription factors to the nucleus, thus affecting stress responses. The sequence is that of Secreted RxLR effector protein BLN03 from Bremia lactucae (Lettuce downy mildew).